Reading from the N-terminus, the 318-residue chain is Cytochrome c biogenesis protein CcsA (318 aa).

8 helical membrane passes run 17-37, 45-65, 75-95, 104-124, 149-169, 224-244, 258-275, and 287-307; these read VLAL…ISFW, SAVV…QLVL, ISNL…AQLL, IVSA…SFAL, VIMC…AVLF, TITV…VWAN, TWAL…HTRF, and VAVA…LLGI.

It belongs to the CcmF/CycK/Ccl1/NrfE/CcsA family. As to quaternary structure, may interact with ccs1.

Its subcellular location is the cellular thylakoid membrane. Its function is as follows. Required during biogenesis of c-type cytochromes (cytochrome c6 and cytochrome f) at the step of heme attachment. This is Cytochrome c biogenesis protein CcsA from Prochlorococcus marinus (strain MIT 9313).